The sequence spans 447 residues: Pup--protein ligase 2 (447 aa).

Glutamate 4 lines the Mg(2+) pocket. Residue arginine 48 coordinates ATP. Tyrosine 50 contacts Mg(2+). Aspartate 52 (proton acceptor) is an active-site residue. Glutamate 58 is a binding site for Mg(2+). Residues threonine 61 and tryptophan 414 each contribute to the ATP site.

The protein belongs to the Pup ligase/Pup deamidase family. Pup-conjugating enzyme subfamily.

It carries out the reaction ATP + [prokaryotic ubiquitin-like protein]-L-glutamate + [protein]-L-lysine = ADP + phosphate + N(6)-([prokaryotic ubiquitin-like protein]-gamma-L-glutamyl)-[protein]-L-lysine.. Its pathway is protein degradation; proteasomal Pup-dependent pathway. It functions in the pathway protein modification; protein pupylation. In terms of biological role, catalyzes the covalent attachment of the prokaryotic ubiquitin-like protein modifier Pup to the proteasomal substrate proteins, thereby targeting them for proteasomal degradation. This tagging system is termed pupylation. The ligation reaction involves the side-chain carboxylate of the C-terminal glutamate of Pup and the side-chain amino group of a substrate lysine. The chain is Pup--protein ligase 2 from Rhodococcus erythropolis (Arthrobacter picolinophilus).